We begin with the raw amino-acid sequence, 151 residues long: Putative pre-16S rRNA nuclease (151 aa).

The protein belongs to the YqgF nuclease family.

It is found in the cytoplasm. Functionally, could be a nuclease involved in processing of the 5'-end of pre-16S rRNA. In Nitrosospira multiformis (strain ATCC 25196 / NCIMB 11849 / C 71), this protein is Putative pre-16S rRNA nuclease.